The primary structure comprises 327 residues: Phenylalanine--tRNA ligase alpha subunit (327 aa).

Residue glutamate 252 coordinates Mg(2+).

The protein belongs to the class-II aminoacyl-tRNA synthetase family. Phe-tRNA synthetase alpha subunit type 1 subfamily. As to quaternary structure, tetramer of two alpha and two beta subunits. The cofactor is Mg(2+).

The protein localises to the cytoplasm. The catalysed reaction is tRNA(Phe) + L-phenylalanine + ATP = L-phenylalanyl-tRNA(Phe) + AMP + diphosphate + H(+). In Shewanella baltica (strain OS223), this protein is Phenylalanine--tRNA ligase alpha subunit.